The following is a 323-amino-acid chain: Nucleotide-binding protein ZMO1325 (323 aa).

ATP is bound at residue 25-32 (GLSGAGKS). Position 78-81 (78-81 (DSRT)) interacts with GTP.

This sequence belongs to the RapZ-like family.

Functionally, displays ATPase and GTPase activities. This Zymomonas mobilis subsp. mobilis (strain ATCC 31821 / ZM4 / CP4) protein is Nucleotide-binding protein ZMO1325.